The chain runs to 375 residues: F-box/kelch-repeat protein At4g39580 (375 aa).

Residues 20–66 (PTTNLFLPDDILLSSLSRISRLYYPTFSLVSKSFRSLIASPELYQTR) enclose the F-box domain. 3 Kelch repeats span residues 132–178 (NIYA…VLDG), 179–225 (KIYV…KSVG), and 229–269 (KYHL…VINN).

This is F-box/kelch-repeat protein At4g39580 from Arabidopsis thaliana (Mouse-ear cress).